The primary structure comprises 500 residues: Na(+)/H(+) antiporter NhaB (500 aa).

Transmembrane regions (helical) follow at residues 34-54, 58-78, 96-116, 129-149, 150-170, 205-225, 241-261, 311-331, 350-370, 394-414, 450-470, and 477-497; these read LLLATLGPVVTGWVLVIQFIF, MALKCYPLMPGGLLLVEALLL, VILLLMFMVAGIHFMKELLLF, AVLSLLFCVLSAFLSAFLDAL, TVTAVIISAAVGFYAVYHRVA, LLMHGAVGTALGGVCTLVGEP, FFLKVAPVSMPVLAAGLVTCV, ILIVCLGLHIAEVGLIGLMVI, FQDAMPFTALLVVFFAVVAVI, MLYLANGLLSAISDNVFVATI, ATPNGQAAFLFLLTSAIAPLI, and MVWMALPYTVVMGGLGWWAVT.

This sequence belongs to the NhaB Na(+)/H(+) (TC 2.A.34) antiporter family.

It localises to the cell inner membrane. It carries out the reaction 2 Na(+)(in) + 3 H(+)(out) = 2 Na(+)(out) + 3 H(+)(in). Its function is as follows. Na(+)/H(+) antiporter that extrudes sodium in exchange for external protons. This is Na(+)/H(+) antiporter NhaB from Pseudomonas entomophila (strain L48).